A 123-amino-acid polypeptide reads, in one-letter code: Ribonuclease P protein component (123 aa).

It belongs to the RnpA family. In terms of assembly, consists of a catalytic RNA component (M1 or rnpB) and a protein subunit.

The catalysed reaction is Endonucleolytic cleavage of RNA, removing 5'-extranucleotides from tRNA precursor.. RNaseP catalyzes the removal of the 5'-leader sequence from pre-tRNA to produce the mature 5'-terminus. It can also cleave other RNA substrates such as 4.5S RNA. The protein component plays an auxiliary but essential role in vivo by binding to the 5'-leader sequence and broadening the substrate specificity of the ribozyme. This is Ribonuclease P protein component from Streptococcus pneumoniae (strain JJA).